Here is a 206-residue protein sequence, read N- to C-terminus: ATP-dependent Clp protease proteolytic subunit (206 aa).

S110 serves as the catalytic Nucleophile. H135 is an active-site residue.

This sequence belongs to the peptidase S14 family. In terms of assembly, fourteen ClpP subunits assemble into 2 heptameric rings which stack back to back to give a disk-like structure with a central cavity, resembling the structure of eukaryotic proteasomes.

It localises to the cytoplasm. The catalysed reaction is Hydrolysis of proteins to small peptides in the presence of ATP and magnesium. alpha-casein is the usual test substrate. In the absence of ATP, only oligopeptides shorter than five residues are hydrolyzed (such as succinyl-Leu-Tyr-|-NHMec, and Leu-Tyr-Leu-|-Tyr-Trp, in which cleavage of the -Tyr-|-Leu- and -Tyr-|-Trp bonds also occurs).. Its function is as follows. Cleaves peptides in various proteins in a process that requires ATP hydrolysis. Has a chymotrypsin-like activity. Plays a major role in the degradation of misfolded proteins. This chain is ATP-dependent Clp protease proteolytic subunit, found in Edwardsiella ictaluri (strain 93-146).